The chain runs to 310 residues: Quinolinate synthase 2 (310 aa).

Iminosuccinate contacts are provided by H30 and S47. C92 is a binding site for [4Fe-4S] cluster. Iminosuccinate-binding positions include 118 to 120 (YVN) and S135. C177 contacts [4Fe-4S] cluster. Iminosuccinate is bound by residues 203 to 205 (HPE) and T220. C265 provides a ligand contact to [4Fe-4S] cluster.

It belongs to the quinolinate synthase family. Type 2 subfamily. [4Fe-4S] cluster is required as a cofactor.

The protein resides in the cytoplasm. The catalysed reaction is iminosuccinate + dihydroxyacetone phosphate = quinolinate + phosphate + 2 H2O + H(+). It participates in cofactor biosynthesis; NAD(+) biosynthesis; quinolinate from iminoaspartate: step 1/1. Its function is as follows. Catalyzes the condensation of iminoaspartate with dihydroxyacetone phosphate to form quinolinate. This Methanosarcina acetivorans (strain ATCC 35395 / DSM 2834 / JCM 12185 / C2A) protein is Quinolinate synthase 2.